The primary structure comprises 237 residues: LexA repressor (237 aa).

The segment at residues 26-46 (FDEMKDALDLRSKSGIHRLIT) is a DNA-binding region (H-T-H motif). Catalysis depends on for autocatalytic cleavage activity residues serine 158 and lysine 196.

It belongs to the peptidase S24 family. In terms of assembly, homodimer.

It carries out the reaction Hydrolysis of Ala-|-Gly bond in repressor LexA.. Functionally, represses a number of genes involved in the response to DNA damage (SOS response), including recA and lexA. In the presence of single-stranded DNA, RecA interacts with LexA causing an autocatalytic cleavage which disrupts the DNA-binding part of LexA, leading to derepression of the SOS regulon and eventually DNA repair. This is LexA repressor from Rhodopseudomonas palustris (strain BisB18).